The sequence spans 254 residues: Probable triosephosphate isomerase 2 (254 aa).

9-11 serves as a coordination point for substrate; that stretch reads NMK. The Electrophile role is filled by His-96. The active-site Proton acceptor is the Glu-168. Substrate is bound by residues Gly-174 and Ser-212.

The protein belongs to the triosephosphate isomerase family. In terms of assembly, homodimer.

It localises to the cytoplasm. It carries out the reaction D-glyceraldehyde 3-phosphate = dihydroxyacetone phosphate. It participates in carbohydrate biosynthesis; gluconeogenesis. The protein operates within carbohydrate degradation; glycolysis; D-glyceraldehyde 3-phosphate from glycerone phosphate: step 1/1. Functionally, involved in the gluconeogenesis. Catalyzes stereospecifically the conversion of dihydroxyacetone phosphate (DHAP) to D-glyceraldehyde-3-phosphate (G3P). The sequence is that of Probable triosephosphate isomerase 2 from Listeria monocytogenes serovar 1/2a (strain ATCC BAA-679 / EGD-e).